A 248-amino-acid polypeptide reads, in one-letter code: Serine/arginine-rich splicing factor 1 (248 aa).

Position 2 is an N-acetylserine (serine 2). At serine 2 the chain carries Phosphoserine. In terms of domain architecture, RRM 1 spans 16 to 91; that stretch reads CRIYVGNLPP…YRLRVEFPRS (76 aa). Lysine 30 participates in a covalent cross-link: Glycyl lysine isopeptide (Lys-Gly) (interchain with G-Cter in SUMO2). The residue at position 38 (lysine 38) is an N6-acetyllysine; alternate. A Glycyl lysine isopeptide (Lys-Gly) (interchain with G-Cter in SUMO2); alternate cross-link involves residue lysine 38. A disordered region spans residues 88–134; the sequence is FPRSGRGTGRGGGGGGGGGAPRGRYGPPSRRSENRVVVSGLPPSGSW. Asymmetric dimethylarginine; alternate is present on residues arginine 93, arginine 97, and arginine 109. 3 positions are modified to omega-N-methylarginine; alternate: arginine 93, arginine 97, and arginine 109. A compositionally biased stretch (gly residues) spans 93 to 108; it reads RGTGRGGGGGGGGGAP. Residue arginine 111 is modified to Omega-N-methylarginine. An RRM 2 domain is found at 121–195; it reads NRVVVSGLPP…ETAYIRVKVD (75 aa). Serine 133 carries the phosphoserine modification. Position 179 is an N6-acetyllysine (lysine 179). Positions 191 to 248 are disordered; the sequence is RVKVDGPRSPSYGRSRSRSRSRSRNRSRSNSRSRSYSPRRSRGSPRYSPRHSRSRSRT. An interaction with SAFB1 region spans residues 198-247; that stretch reads RSPSYGRSRSRSRSRSRNRSRSNSRSRSYSPRRSRGSPRYSPRHSRSRSR. A phosphoserine mark is found at serine 199 and serine 201. Tyrosine 202 is subject to Phosphotyrosine. Phosphoserine occurs at positions 205, 207, 209, 231, 234, and 238. The segment covering 205–248 has biased composition (basic residues); it reads SRSRSRSRSRNRSRSNSRSRSYSPRRSRGSPRYSPRHSRSRSRT.

Belongs to the splicing factor SR family. Consists of two polypeptides of p32 and p33. Identified in the spliceosome C complex. Component of a ribonucleoprotein complex containing mRNAs and RNA-binding proteins including DDX5, HNRNPH2 and SRSF1 as well as splicing regulator ARVCF. In vitro, self-associates and binds SRSF2, SNRNP70 and U2AF1 but not U2AF2. Binds SREK1/SFRS12. Interacts with SAFB/SAFB1. Interacts with PSIP1/LEDGF. Interacts with RSRC1 (via Arg/Ser-rich domain). Interacts with ZRSR2/U2AF1-RS2. Interacts with CCDC55 (via C-terminus). Interacts with SRPK1 and a sliding docking interaction is essential for its sequential and processive phosphorylation by SRPK1. Interacts with NXF1. Interacts with CCNL1, CCNL2 and CDK11B. Interacts with RRP1B. Interacts (when phosphorylated in its RS domain) with TNPO3; promoting nuclear import. Interacts with ILDR1 (via C-terminus) and ILDR2. Post-translationally, phosphorylated by CLK1, CLK2, CLK3 and CLK4. Phosphorylated by SRPK1 at multiple serines in its RS domain via a directional (C-terminal to N-terminal) and a dual-track mechanism incorporating both processive phosphorylation (in which the kinase stays attached to the substrate after each round of phosphorylation) and distributive phosphorylation steps (in which the kinase and substrate dissociate after each phosphorylation event). The RS domain of SRSF1 binds to a docking groove in the large lobe of the kinase domain of SRPK1 and this induces certain structural changes in SRPK1 and/or RRM 2 domain of SRSF1, allowing RRM 2 to bind the kinase and initiate phosphorylation. The cycles continue for several phosphorylation steps in a processive manner (steps 1-8) until the last few phosphorylation steps (approximately steps 9-12). During that time, a mechanical stress induces the unfolding of the beta-4 motif in RRM 2, which then docks at the docking groove of SRPK1. This also signals RRM 2 to begin to dissociate, which facilitates SRSF1 dissociation after phosphorylation is completed. Asymmetrically dimethylated at arginines, probably by PRMT1, methylation promotes localization to nuclear speckles.

It localises to the cytoplasm. It is found in the nucleus speckle. Its function is as follows. Plays a role in preventing exon skipping, ensuring the accuracy of splicing and regulating alternative splicing. Interacts with other spliceosomal components, via the RS domains, to form a bridge between the 5'- and 3'-splice site binding components, U1 snRNP and U2AF. Can stimulate binding of U1 snRNP to a 5'-splice site-containing pre-mRNA. Binds to purine-rich RNA sequences, either the octamer, 5'-RGAAGAAC-3' (r=A or G) or the decamers, AGGACAGAGC/AGGACGAAGC. Binds preferentially to the 5'-CGAGGCG-3' motif in vitro. Three copies of the octamer constitute a powerful splicing enhancer in vitro, the ASF/SF2 splicing enhancer (ASE) which can specifically activate ASE-dependent splicing. May function as export adapter involved in mRNA nuclear export through the TAP/NXF1 pathway. The sequence is that of Serine/arginine-rich splicing factor 1 (SRSF1) from Pongo abelii (Sumatran orangutan).